The primary structure comprises 216 residues: Acyl-homoserine-lactone synthase (216 aa).

It belongs to the autoinducer synthase family.

The catalysed reaction is a fatty acyl-[ACP] + S-adenosyl-L-methionine = an N-acyl-L-homoserine lactone + S-methyl-5'-thioadenosine + holo-[ACP] + H(+). Its function is as follows. Required for the synthesis of an acyl-HSL autoinducer that binds to YukR and which is involved in the regulation of motility and morphology. The sequence is that of Acyl-homoserine-lactone synthase (yukI) from Yersinia ruckeri.